Consider the following 95-residue polypeptide: MNAVIVLCVTISAVLIHQCYSTAEATLSINGGDMCIEKTCNRSIDAAGKKVIAGCPGGCLCVFNVSDVTYPANGTCYQLATTTTNRPGAVMERER.

Positions M1–S21 are cleaved as a signal peptide. 3 disulfide bridges follow: C35/C59, C40/C61, and C55/C76.

Belongs to the RaCI family. In terms of tissue distribution, expressed in salivary glands.

Its subcellular location is the secreted. Functionally, complement inhibitor. Prevents complement-mediated C5 activation by binding to C5. Binds C5 at a different binding site than the other tick complement inhibitors OmCI and CirpT1, and the drug eculizumab. This is Complement inhibitor RaCI5 from Rhipicephalus appendiculatus (Brown ear tick).